We begin with the raw amino-acid sequence, 384 residues long: SAGA complex subunit Spt3 (384 aa).

The protein belongs to the SPT3 family. In terms of assembly, component of the Spt-Ada-Gcn5 acetyltransferase (SAGA) complex consisting of wda/Taf5L, Saf6, Taf9, Taf10b, Taf12, Ada1, Spt3, Spt7, Spt20, Sf3b3, Sf3b5, Nipped-A/Tra1, a histone acetyltransferase (HAT) module made up of Gcn5, Ada2b (Isoform B), Ada3 and Sgf29, and a deubiquitinase (DUB) module made up of not/nonstop, Sgf11 and e(y)2 tethered to SAGA by Atxn7. Taf5 and Taf10, which has partially redundant properties with Taf10b, may also be part of this complex.

It localises to the nucleus. The protein localises to the chromosome. Functionally, component of the transcription regulatory complex SAGA, a multiprotein complex that activates transcription by remodeling chromatin and mediating histone acetylation and deubiquitination. The SAGA complex predominantly acetylates histone H3. Required for oogenesis; involved in transcriptional activation. This chain is SAGA complex subunit Spt3, found in Drosophila melanogaster (Fruit fly).